Consider the following 201-residue polypeptide: FMN-dependent NADH:quinone oxidoreductase (201 aa).

FMN-binding positions include serine 10, 16-18, 96-99, and 140-143; these read SQS, MYNF, and SRGG.

The protein belongs to the azoreductase type 1 family. In terms of assembly, homodimer. FMN is required as a cofactor.

It carries out the reaction 2 a quinone + NADH + H(+) = 2 a 1,4-benzosemiquinone + NAD(+). The catalysed reaction is N,N-dimethyl-1,4-phenylenediamine + anthranilate + 2 NAD(+) = 2-(4-dimethylaminophenyl)diazenylbenzoate + 2 NADH + 2 H(+). Functionally, quinone reductase that provides resistance to thiol-specific stress caused by electrophilic quinones. Also exhibits azoreductase activity. Catalyzes the reductive cleavage of the azo bond in aromatic azo compounds to the corresponding amines. The sequence is that of FMN-dependent NADH:quinone oxidoreductase from Yersinia enterocolitica serotype O:8 / biotype 1B (strain NCTC 13174 / 8081).